A 291-amino-acid polypeptide reads, in one-letter code: UDP-N-acetylenolpyruvoylglucosamine reductase (291 aa).

The 166-residue stretch at 22-187 (RIGGPARYFK…ASATFQLTKD (166 aa)) folds into the FAD-binding PCMH-type domain. R166 is a catalytic residue. C214 acts as the Proton donor in catalysis. E283 is an active-site residue.

It belongs to the MurB family. It depends on FAD as a cofactor.

It localises to the cytoplasm. It catalyses the reaction UDP-N-acetyl-alpha-D-muramate + NADP(+) = UDP-N-acetyl-3-O-(1-carboxyvinyl)-alpha-D-glucosamine + NADPH + H(+). It participates in cell wall biogenesis; peptidoglycan biosynthesis. Functionally, cell wall formation. This Chlamydia trachomatis serovar L2 (strain ATCC VR-902B / DSM 19102 / 434/Bu) protein is UDP-N-acetylenolpyruvoylglucosamine reductase.